A 218-amino-acid polypeptide reads, in one-letter code: uncharacterized protein (218 aa).

This is an uncharacterized protein from Rickettsia prowazekii (strain Madrid E).